The chain runs to 1279 residues: Cellulose synthase operon protein C (1279 aa).

The N-terminal stretch at 1 to 21 (MRRHTLAIAILAALASTASVA) is a signal peptide. 10 TPR repeats span residues 27–60 (QSLL…SPDQ), 62–94 (DALY…SPVP), 218–250 (ADET…HPDD), 306–339 (VDAL…PGGA), 384–417 (PGAA…HPGD), 460–493 (ALRA…DPEN), 495–527 (WTRF…QPNQ), 606–639 (PERV…NPNP), 719–752 (ALGV…NPNN), and 787–820 (PEIL…ENAM).

It functions in the pathway glycan metabolism; bacterial cellulose biosynthesis. Functionally, required for maximal bacterial cellulose synthesis. The polypeptide is Cellulose synthase operon protein C (bscS) (Pseudomonas fluorescens (strain SBW25)).